Reading from the N-terminus, the 29-residue chain is GWTLNSAGYLLGPHAVDNHRSFNDKHGFT.

Threonine 29 carries the post-translational modification Threonine amide.

The protein belongs to the galanin family.

It localises to the secreted. Contracts smooth muscle of the gastrointestinal and genitourinary tract, regulates growth hormone release, modulates insulin release, and may be involved in the control of adrenal secretion. The sequence is that of Galanin (GAL) from Gallus gallus (Chicken).